The sequence spans 238 residues: Putative csd-like protein HI_1343 (238 aa).

Position 146 is an N6-(pyridoxal phosphate)lysine (Lys-146).

This sequence belongs to the class-V pyridoxal-phosphate-dependent aminotransferase family. Csd subfamily.

The polypeptide is Putative csd-like protein HI_1343 (Haemophilus influenzae (strain ATCC 51907 / DSM 11121 / KW20 / Rd)).